The following is a 358-amino-acid chain: DNA replication and repair protein RecF (358 aa).

30–37 (GNNGSGKT) lines the ATP pocket.

This sequence belongs to the RecF family.

It is found in the cytoplasm. Functionally, the RecF protein is involved in DNA metabolism; it is required for DNA replication and normal SOS inducibility. RecF binds preferentially to single-stranded, linear DNA. It also seems to bind ATP. This chain is DNA replication and repair protein RecF, found in Histophilus somni (strain 2336) (Haemophilus somnus).